A 522-amino-acid polypeptide reads, in one-letter code: Phosphatidylinositol 3,4,5-trisphosphate 3-phosphatase TPTE2 (522 aa).

Over residues 1 to 11 (MNESPQTNEFK) the composition is skewed to polar residues. Residues 1–28 (MNESPQTNEFKGTTEEAPAKESPHTSEF) are disordered. Positions 12–27 (GTTEEAPAKESPHTSE) are enriched in basic and acidic residues. The next 3 helical transmembrane spans lie at 66 to 86 (IVHS…LVLL), 111 to 131 (ISLA…FVEG), and 146 to 166 (AIIV…IKLL). In terms of domain architecture, Phosphatase tensin-type spans 210 to 386 (RRYTRDGFDL…GYFAQVKHLY (177 aa)). Catalysis depends on C320, which acts as the Phosphocysteine intermediate. Residues 393 to 522 (RRILFIKRFI…FAVEILFGEK (130 aa)) enclose the C2 tensin-type domain.

As to expression, isoform 3 is expressed in testis, brain and stomach while isoform 4 seems to be testis-specific.

The protein resides in the endoplasmic reticulum membrane. It localises to the golgi apparatus membrane. Its subcellular location is the cytoplasm. The enzyme catalyses a 1,2-diacyl-sn-glycero-3-phospho-(1D-myo-inositol-3,4,5-trisphosphate) + H2O = a 1,2-diacyl-sn-glycero-3-phospho-(1D-myo-inositol-4,5-bisphosphate) + phosphate. Its function is as follows. Acts as a lipid phosphatase, removing the phosphate in the D3 position of the inositol ring from phosphatidylinositol 3,4,5-trisphosphate. Shows no phosphoinositide phosphatase activity. This is Phosphatidylinositol 3,4,5-trisphosphate 3-phosphatase TPTE2 (TPTE2) from Homo sapiens (Human).